We begin with the raw amino-acid sequence, 568 residues long: Sphingosine-1-phosphate lyase 1 (568 aa).

Topologically, residues 1–40 (MPGTDLLKLKDFEPYLEILESYSTKAKNYVNGYCTKYEPW) are lumenal. The chain crosses the membrane as a helical; Signal-anchor for type III membrane protein span at residues 41 to 61 (QLIAWSVLCTLLIVWVYELIF). At 62-568 (QPESLWSRFK…NQMNGSPKPR (507 aa)) the chain is on the cytoplasmic side. Position 353 is an N6-(pyridoxal phosphate)lysine; alternate (Lys-353). Position 353 is an N6-acetyllysine; alternate (Lys-353). 3'-nitrotyrosine is present on residues Tyr-356 and Tyr-366. Ser-564 is subject to Phosphoserine.

The protein belongs to the group II decarboxylase family. Sphingosine-1-phosphate lyase subfamily. Pyridoxal 5'-phosphate is required as a cofactor. As to expression, highest levels are found in liver, small intestine and thymus, followed by kidney, lung, heart, spleen and brain (at protein level). Also detected in stomach, testis and skeletal muscle (at protein level).

It is found in the endoplasmic reticulum membrane. It catalyses the reaction sphinganine 1-phosphate = hexadecanal + phosphoethanolamine. The catalysed reaction is sphing-4-enine 1-phosphate = (2E)-hexadecenal + phosphoethanolamine. It participates in lipid metabolism; sphingolipid metabolism. Its function is as follows. Cleaves phosphorylated sphingoid bases (PSBs), such as sphingosine-1-phosphate, into fatty aldehydes and phosphoethanolamine. Elevates stress-induced ceramide production and apoptosis. Required for global lipid homeostasis in liver and cholesterol homeostasis in fibroblasts. Involved in the regulation of pro-inflammatory response and neutrophil trafficking. Modulates neuronal autophagy via phosphoethanolamine production which regulates accumulation of aggregate-prone proteins such as APP. Seems to play a role in establishing neuronal contact sites and axonal maintenance. This Mus musculus (Mouse) protein is Sphingosine-1-phosphate lyase 1.